The following is a 302-amino-acid chain: uncharacterized protein (302 aa).

The 60-residue stretch at 1 to 60 (MRMNMSDFATFFAVARNQSFRAAGDELGLSSSAISHSIKTLEQRLKIRLFNRTTRSVSLT) folds into the HTH lysR-type domain. The H-T-H motif DNA-binding region spans 20 to 40 (FRAAGDELGLSSSAISHSIKT).

It belongs to the LysR transcriptional regulatory family.

This is an uncharacterized protein from Escherichia coli (strain K12).